The sequence spans 426 residues: Oligouridylate-binding protein 1A (426 aa).

Residues 1–26 are disordered; that stretch reads MQNQRLIKQQQQQQQQQHQQAMIQQA. Low complexity predominate over residues 9 to 26; sequence QQQQQQQQQHQQAMIQQA. 2 RRM domains span residues 63-137 and 148-226; these read RSVY…WAYA and FNIF…WATK. The tract at residues 230-268 is disordered; sequence FGEDKHSSDGKSVVELTNGSSEDGRELSNEDAPENNPQF. Position 250 is a phosphoserine (serine 250). The region spanning 269 to 344 is the RRM 3 domain; it reads TTVYVGNLSP…RQIRCSWGNK (76 aa).

As to quaternary structure, interacts with UBA1A and UBA2A.

It is found in the nucleus. Its function is as follows. Heterogeneous nuclear ribonucleoprotein (hnRNP)-like protein that acts as a component of the pre-mRNA processing machinery. Functions to facilitate the nuclear maturation of plant pre-mRNAs. The protein is Oligouridylate-binding protein 1A (UBP1A) of Arabidopsis thaliana (Mouse-ear cress).